The primary structure comprises 124 residues: UPF0738 protein ABC2521 (124 aa).

This sequence belongs to the UPF0738 family.

The sequence is that of UPF0738 protein ABC2521 from Shouchella clausii (strain KSM-K16) (Alkalihalobacillus clausii).